A 292-amino-acid chain; its full sequence is Phosphotriesterase homology protein (292 aa).

H12, H14, and E125 together coordinate Zn(2+). Beta-D-glucose is bound at residue 148 to 149; that stretch reads HN. H158 lines the Zn(2+) pocket. Positions 176, 178, and 181 each coordinate beta-D-glucose. Zn(2+)-binding residues include H186 and D243. Residues D280 and R284 each contribute to the beta-D-glucose site.

This sequence belongs to the metallo-dependent hydrolases superfamily. Phosphotriesterase family. In terms of assembly, monomer. Zn(2+) serves as cofactor.

Its activity is regulated as follows. Activity is higher in the enzyme containing Mn(2+) than that containing Zn(2+). Its function is as follows. Catalyzes the hydrolysis of phosphorylated glyceryl acetates in which the presence of a phosphate group is required for the enzymatic hydrolysis. Hydrolyzes a dibutyl glycerol derivative suggesting it acts on phosphoglycerol substrates with a butyrate leaving group. Also active with aromatic acetates and propionates. No activity with various sugar phosphates, with various nitrophenylphosphate or nitrophenylphosphonate derivatives, or with phosphorylated or non-phosphorylated sugar lactones tested. Does not hydrolyze non-phosphorylated carboxyesters with long chain leaving groups. No general esterase, aminopeptidase, sulfatase, phosphatase, carbonic anhydrase, phosphodiesterase, and phosphotriesterase activities detected when tested with the following non-specific substrates: p-nitrophenyl acetate, L-alanine nitroanilide, p-nitrophenyl sulfate, bis(p-nitrophenyl) phosphate, paraoxon, and p-nitrophenyl phosphate. In Escherichia coli (strain K12), this protein is Phosphotriesterase homology protein.